We begin with the raw amino-acid sequence, 234 residues long: MFSIRSSSRVLLKASSATTRATLNAAASKTFTRSKYSLPELDYEFSATEPYISGQINEIHYTKHHQTYVNNLNASIEQAVEAKSKGEVKKLVALEKAINFNGGGYLNHCLWWKNLAPVSQGGGQPPSEDSKLGKQIVKQFGSLDKLIEITNGKLAGIQGSGWAFIVKNKANGDTIDVITTANQDTVTDPNLVPLIAIDAWEHAYYLQYQNVKADYFKNLWHVINWKEAERRFEF.

A mitochondrion-targeting transit peptide spans 1–34 (MFSIRSSSRVLLKASSATTRATLNAAASKTFTRS). Mn(2+)-binding residues include His-60, His-108, Asp-198, and His-202.

This sequence belongs to the iron/manganese superoxide dismutase family. As to quaternary structure, homotetramer. Mn(2+) serves as cofactor.

It localises to the mitochondrion matrix. The catalysed reaction is 2 superoxide + 2 H(+) = H2O2 + O2. Destroys superoxide anion radicals which are normally produced within the cells and which are toxic to biological systems. The sequence is that of Superoxide dismutase [Mn], mitochondrial (SOD2) from Candida albicans (Yeast).